The primary structure comprises 439 residues: 2-(3-amino-3-carboxypropyl)histidine synthase subunit 1 (439 aa).

The disordered stretch occupies residues 11–54 (STTATPVAPCDPDTCKKSTSTQPRKRFVGRANGSGPSASTSLVK). Polar residues predominate over residues 44-54 (SGPSASTSLVK). Positions 147, 251, and 380 each coordinate [4Fe-4S] cluster.

This sequence belongs to the DPH1/DPH2 family. DPH1 subfamily. As to quaternary structure, component of the 2-(3-amino-3-carboxypropyl)histidine synthase complex composed of DPH1, DPH2, DPH3 and a NADH-dependent reductase, predominantly CBR1. [4Fe-4S] cluster is required as a cofactor.

It localises to the cytoplasm. The catalysed reaction is L-histidyl-[translation elongation factor 2] + S-adenosyl-L-methionine = 2-[(3S)-amino-3-carboxypropyl]-L-histidyl-[translation elongation factor 2] + S-methyl-5'-thioadenosine + H(+). Its pathway is protein modification; peptidyl-diphthamide biosynthesis. Functionally, catalyzes the first step of diphthamide biosynthesis, a post-translational modification of histidine which occurs in elongation factor 2. DPH1 and DPH2 transfer a 3-amino-3-carboxypropyl (ACP) group from S-adenosyl-L-methionine (SAM) to a histidine residue, the reaction is assisted by a reduction system comprising DPH3 and a NADH-dependent reductase, predominantly CBR1. This is 2-(3-amino-3-carboxypropyl)histidine synthase subunit 1 (DPH1) from Yarrowia lipolytica (strain CLIB 122 / E 150) (Yeast).